Here is a 345-residue protein sequence, read N- to C-terminus: Glycerol-3-phosphate dehydrogenase [NAD(P)+] (345 aa).

4 residues coordinate NADPH: serine 23, tyrosine 24, histidine 44, and lysine 118. Positions 118, 147, and 149 each coordinate sn-glycerol 3-phosphate. Alanine 151 provides a ligand contact to NADPH. Sn-glycerol 3-phosphate-binding residues include lysine 203, aspartate 256, serine 266, arginine 267, and asparagine 268. The Proton acceptor role is filled by lysine 203. An NADPH-binding site is contributed by arginine 267. The NADPH site is built by valine 291 and glutamate 293.

It belongs to the NAD-dependent glycerol-3-phosphate dehydrogenase family.

It is found in the cytoplasm. It carries out the reaction sn-glycerol 3-phosphate + NAD(+) = dihydroxyacetone phosphate + NADH + H(+). The enzyme catalyses sn-glycerol 3-phosphate + NADP(+) = dihydroxyacetone phosphate + NADPH + H(+). It functions in the pathway membrane lipid metabolism; glycerophospholipid metabolism. Functionally, catalyzes the reduction of the glycolytic intermediate dihydroxyacetone phosphate (DHAP) to sn-glycerol 3-phosphate (G3P), the key precursor for phospholipid synthesis. In Vibrio vulnificus (strain CMCP6), this protein is Glycerol-3-phosphate dehydrogenase [NAD(P)+].